We begin with the raw amino-acid sequence, 374 residues long: Homoserine O-acetyltransferase (374 aa).

The AB hydrolase-1 domain maps to 45–353 (NAILVLHALT…PYGHDAFLIE (309 aa)). S151 (nucleophile) is an active-site residue. R220 contacts substrate. Active-site residues include D314 and H347. D348 contacts substrate.

Belongs to the AB hydrolase superfamily. MetX family. In terms of assembly, homodimer.

Its subcellular location is the cytoplasm. It catalyses the reaction L-homoserine + acetyl-CoA = O-acetyl-L-homoserine + CoA. It participates in amino-acid biosynthesis; L-methionine biosynthesis via de novo pathway; O-acetyl-L-homoserine from L-homoserine: step 1/1. Its function is as follows. Transfers an acetyl group from acetyl-CoA to L-homoserine, forming acetyl-L-homoserine. The polypeptide is Homoserine O-acetyltransferase (Moorella thermoacetica (strain ATCC 39073 / JCM 9320)).